The primary structure comprises 238 residues: Ribitol-5-phosphate cytidylyltransferase (238 aa).

CTP contacts are provided by residues 7–10 (FAGG) and 80–86 (GETGQES).

This sequence belongs to the IspD/TarI cytidylyltransferase family. TarI subfamily.

The enzyme catalyses D-ribitol 5-phosphate + CTP + H(+) = CDP-L-ribitol + diphosphate. Catalyzes the transfer of the cytidylyl group of CTP to D-ribitol 5-phosphate. The protein is Ribitol-5-phosphate cytidylyltransferase of Vibrio parahaemolyticus serotype O3:K6 (strain RIMD 2210633).